The sequence spans 1030 residues: Probable serine/threonine-protein kinase SIS8 (1030 aa).

2 stretches are compositionally biased toward polar residues: residues 44–58 (PNQS…STTK) and 399–419 (YSAS…NGIE). 4 disordered regions span residues 44-84 (PNQS…PEIK), 399-474 (YSAS…KAPF), 555-625 (TVES…ASST), and 689-736 (LGSN…SDCD). 3 stretches are compositionally biased toward basic and acidic residues: residues 426 to 435 (TEFRTGEHRS), 458 to 471 (ISRE…KVEK), and 560 to 580 (NSTE…EGRH). A compositionally biased stretch (low complexity) spans 613 to 625 (SQSDSSHSEASST). In terms of domain architecture, Protein kinase spans 748–1003 (ITVGERIGLG…AEIMASLKRL (256 aa)). ATP-binding positions include 754 to 762 (IGLGSYGEV) and lysine 775. Aspartate 871 functions as the Proton acceptor in the catalytic mechanism. A compositionally biased stretch (polar residues) spans 1007-1023 (VTGSNIPRPVPSSSSLP). The tract at residues 1007-1030 (VTGSNIPRPVPSSSSLPTEHEQKD) is disordered.

It belongs to the protein kinase superfamily. Ser/Thr protein kinase family. Interacts with UGT72E1. Expressed roots, rosette and cauline leaves, and at lower levels in flowers and siliques.

It localises to the nucleus. It carries out the reaction L-seryl-[protein] + ATP = O-phospho-L-seryl-[protein] + ADP + H(+). The catalysed reaction is L-threonyl-[protein] + ATP = O-phospho-L-threonyl-[protein] + ADP + H(+). Functionally, acts as a negative regulator of salt tolerance. Mediates sugar response during early seedling development. This is Probable serine/threonine-protein kinase SIS8 from Arabidopsis thaliana (Mouse-ear cress).